A 136-amino-acid polypeptide reads, in one-letter code: NADH-quinone oxidoreductase subunit A (136 aa).

3 helical membrane passes run 20–40, 70–90, and 99–119; these read LAVY…VAWW, VPFY…AYIL, and LGWA…VGLV.

Belongs to the complex I subunit 3 family. As to quaternary structure, NDH-1 is composed of 14 different subunits. Subunits NuoA, H, J, K, L, M, N constitute the membrane sector of the complex.

The protein localises to the cell inner membrane. The enzyme catalyses a quinone + NADH + 5 H(+)(in) = a quinol + NAD(+) + 4 H(+)(out). Functionally, NDH-1 shuttles electrons from NADH, via FMN and iron-sulfur (Fe-S) centers, to quinones in the respiratory chain. The immediate electron acceptor for the enzyme in this species is believed to be ubiquinone. Couples the redox reaction to proton translocation (for every two electrons transferred, four hydrogen ions are translocated across the cytoplasmic membrane), and thus conserves the redox energy in a proton gradient. The protein is NADH-quinone oxidoreductase subunit A of Syntrophobacter fumaroxidans (strain DSM 10017 / MPOB).